The chain runs to 406 residues: Leu/Ile/Val-binding protein homolog 5 (406 aa).

A signal peptide spans 1–29 (MIGTRLPAWTRVLACGVAGLSLMTISAKA).

This sequence belongs to the leucine-binding protein family.

Functionally, component of an amino-acid transport system. The sequence is that of Leu/Ile/Val-binding protein homolog 5 from Brucella abortus (strain 2308).